The following is a 332-amino-acid chain: UDP-N-acetylenolpyruvoylglucosamine reductase (332 aa).

The FAD-binding PCMH-type domain maps to 15–184 (IDVSAACFLE…TYVSFRLSKR (170 aa)). R160 is a catalytic residue. S232 (proton donor) is an active-site residue. Residue E328 is part of the active site.

The protein belongs to the MurB family. FAD is required as a cofactor.

It is found in the cytoplasm. It catalyses the reaction UDP-N-acetyl-alpha-D-muramate + NADP(+) = UDP-N-acetyl-3-O-(1-carboxyvinyl)-alpha-D-glucosamine + NADPH + H(+). It participates in cell wall biogenesis; peptidoglycan biosynthesis. Functionally, cell wall formation. This chain is UDP-N-acetylenolpyruvoylglucosamine reductase, found in Bacteroides fragilis (strain ATCC 25285 / DSM 2151 / CCUG 4856 / JCM 11019 / LMG 10263 / NCTC 9343 / Onslow / VPI 2553 / EN-2).